The sequence spans 56 residues: Large ribosomal subunit protein bL32 (56 aa).

This sequence belongs to the bacterial ribosomal protein bL32 family.

The sequence is that of Large ribosomal subunit protein bL32 from Synechococcus sp. (strain CC9311).